Here is a 502-residue protein sequence, read N- to C-terminus: Basic immunoglobulin-like variable motif-containing protein (502 aa).

2 disordered regions span residues 1-32 (MPNA…LQGA) and 438-460 (SQHP…SKKQ). Residues 12 to 26 (DPGHGEHTSENKSPE) show a composition bias toward basic and acidic residues.

Belongs to the BIVM family.

Its subcellular location is the cytoplasm. The protein localises to the nucleus. The protein is Basic immunoglobulin-like variable motif-containing protein (Bivm) of Mus musculus (Mouse).